Reading from the N-terminus, the 896-residue chain is Protein translocase subunit SecA (896 aa).

ATP-binding positions include Q87, 105-109 (GEGKT), and D512. The segment at 867–889 (QEPARSNRVAGRNDPCPCGSGKK) is disordered. 4 residues coordinate Zn(2+): C882, C884, C893, and C894.

Belongs to the SecA family. Monomer and homodimer. Part of the essential Sec protein translocation apparatus which comprises SecA, SecYEG and auxiliary proteins SecDF-YajC and YidC. Requires Zn(2+) as cofactor.

It localises to the cell inner membrane. The protein localises to the cytoplasm. It carries out the reaction ATP + H2O + cellular proteinSide 1 = ADP + phosphate + cellular proteinSide 2.. Its function is as follows. Part of the Sec protein translocase complex. Interacts with the SecYEG preprotein conducting channel. Has a central role in coupling the hydrolysis of ATP to the transfer of proteins into and across the cell membrane, serving as an ATP-driven molecular motor driving the stepwise translocation of polypeptide chains across the membrane. The polypeptide is Protein translocase subunit SecA (Pelobacter propionicus (strain DSM 2379 / NBRC 103807 / OttBd1)).